A 513-amino-acid chain; its full sequence is GMP synthase [glutamine-hydrolyzing] (513 aa).

Residues 8–198 (MILVLDFGSQ…VFGVCDCEGK (191 aa)) form the Glutamine amidotransferase type-1 domain. Catalysis depends on C85, which acts as the Nucleophile. Catalysis depends on residues H172 and E174. The 190-residue stretch at 199–388 (WSMENFIEIE…LGLPDDIVWR (190 aa)) folds into the GMPS ATP-PPase domain. 226–232 (SGGVDSS) is an ATP binding site.

In terms of assembly, homodimer.

The enzyme catalyses XMP + L-glutamine + ATP + H2O = GMP + L-glutamate + AMP + diphosphate + 2 H(+). Its pathway is purine metabolism; GMP biosynthesis; GMP from XMP (L-Gln route): step 1/1. Functionally, catalyzes the synthesis of GMP from XMP. In Bacillus velezensis (strain DSM 23117 / BGSC 10A6 / LMG 26770 / FZB42) (Bacillus amyloliquefaciens subsp. plantarum), this protein is GMP synthase [glutamine-hydrolyzing].